Here is an 854-residue protein sequence, read N- to C-terminus: MAKIRIHEIAKELGYDSKEIIEKANELGLGIKTASNAVEPDIAVAIYEYIQTREIPEAFKKNIKTPTAKKPKKENAKDQEKLNESEKKEPKKEESKEQEKQEIIDTHKPQSLASATLAKRRGLVIVKKKKDEEEIQVKKEEIKNSNDISINNEERLSLKTMFSNADESLKKKKKEKKSFVASKKESTEKMNFLDEHDFGDISLDDEDEVVLPDFSVKEQEKPQNINKKQPNFIRQAVGNSAGFGLEGGIQRRSRKKPPKKIEKKEVEEVSSVSISKEIRVYEFADKIGKSTSEVISKLFMLGMMTTKNDFLDEDAIEILAAEFGIEINIINEADEFDYVKDYEEETDEKDLVTRAPVITIMGHVDHGKTSLLDYIRKSRVASGEAGGITQHVGAYMVEKNGRKITFIDTPGHEAFTAMRARGASITDIVIIVVAADDGVKPQTKEAINHAKAAGVPIIIAINKMDKEAANPDMVKTQLAEMEIMPVEWGGSYEFVGVSAKTGMGIEDLLEIVLLQADILELKANPKSFAKASIIESSVQKGRGAVATIIVQNGTLAVGSTVVAGEAYGKVRAMSDDQGKALKEIKPGECGVIVGLSEVADAGEILIAVKTDKEAREYANKRHEYNRQKELSKSTKVSIDELGAKIKEGNLKALPVILKADVQGSLEALKASLEKLRNDEIKVNIIYSGVGGITQSDIELASASENSIVLGFNIRPTGEVKERAKDKGVEIKTYNVIYNLLDDVKALLGGMMSPIISEEQLGQAEIRQVINVPKIGQIAGCMVTEGVINRGAKIRLIRDGVVVYEGNVSSLKRFKDDAKEVAKGYECGVGIEGCDDMRVGDYIESYKEVEEQASL.

Residues 61–72 (KNIKTPTAKKPK) show a composition bias toward basic residues. Disordered stretches follow at residues 61-115 (KNIK…LASA) and 167-186 (ESLKKKKKEKKSFVASKKES). Basic and acidic residues predominate over residues 73 to 108 (KENAKDQEKLNESEKKEPKKEESKEQEKQEIIDTHK). The tr-type G domain maps to 353–520 (TRAPVITIMG…IVLLQADILE (168 aa)). Positions 362–369 (GHVDHGKT) are G1. Residue 362–369 (GHVDHGKT) coordinates GTP. Residues 387–391 (GITQH) are G2. The interval 408–411 (DTPG) is G3. Residues 408–412 (DTPGH) and 462–465 (NKMD) contribute to the GTP site. Residues 462–465 (NKMD) form a G4 region. The tract at residues 498–500 (SAK) is G5.

It belongs to the TRAFAC class translation factor GTPase superfamily. Classic translation factor GTPase family. IF-2 subfamily.

The protein resides in the cytoplasm. Functionally, one of the essential components for the initiation of protein synthesis. Protects formylmethionyl-tRNA from spontaneous hydrolysis and promotes its binding to the 30S ribosomal subunits. Also involved in the hydrolysis of GTP during the formation of the 70S ribosomal complex. In Campylobacter jejuni subsp. doylei (strain ATCC BAA-1458 / RM4099 / 269.97), this protein is Translation initiation factor IF-2.